The primary structure comprises 644 residues: METIKITTAQALIKFLNQQYVELDGQEYRFVQGIFTIFGHGNVLGIGQALEEDPGHLEVYQGHNEQGMAQSAIAFAKQSNRKQIYACTSSVGPGAANMVTAAATATANNIPVLLLPGDTFSTRQPDPVLQQVEQTYNLSITTNDAFKAVSKYWDRVNRPEQLMTAMINAMRVLTDPANTGAVTIALPQDVQGEIYDFPEYFFKKRVHRIERTPPSKQAIEDAVELIKRKKKPLIICGGGVRYSEAAESLKRFSEKFNIPFGETQAGKSAIEWSYGLNLGGIGVTGNSAANSIAKDADLIIGVGTRFTDFTTCSKFLFQNDDVEFLTINISSFHANKLDALKVISDAKVGLDTIANELERQGYSSDYEDEIKKAKNEWEKELNRLFNIEYTEKEFVPEIAGHCDKVVEEFYKEFDSCLTQTKVLGELNELLDDDAIVIGASGSLPGDLHKVWCPKRSNTYHMEYGYSCMGYEVSAALGVKLAEEDKEVYSLVGDGAYLMLHSELITSIKEGKKINILLFDNAGFGCINNLQMSNGMGSFATEFRHRNSETGKLDGKLLKIDFAKSAEGYGVKTYKVNTIDKLRYAIEDSKKQKISTLIDIKILPKTMTRGYESWWHVGVSEKSKNPKINKAYESKINHLAKARKY.

Glu65 lines the thiamine diphosphate pocket. A thiamine pyrophosphate binding region spans residues 442-522 (SLPGDLHKVW…INILLFDNAG (81 aa)). Mg(2+)-binding residues include Asp493 and Asn520.

This sequence belongs to the TPP enzyme family. Mg(2+) is required as a cofactor. The cofactor is thiamine diphosphate.

It carries out the reaction 3D-3,5/4-trihydroxycyclohexane-1,2-dione + H2O = 5-deoxy-D-glucuronate + H(+). It functions in the pathway polyol metabolism; myo-inositol degradation into acetyl-CoA; acetyl-CoA from myo-inositol: step 3/7. In terms of biological role, involved in the cleavage of the C1-C2 bond of 3D-(3,5/4)-trihydroxycyclohexane-1,2-dione (THcHDO) to yield 5-deoxy-glucuronate (5DG). In Clostridium tetani (strain Massachusetts / E88), this protein is 3D-(3,5/4)-trihydroxycyclohexane-1,2-dione hydrolase.